We begin with the raw amino-acid sequence, 149 residues long: 6,7-dimethyl-8-ribityllumazine synthase (149 aa).

5-amino-6-(D-ribitylamino)uracil-binding positions include F22, 56-58, and 80-82; these read ALE and AVI. 85–86 contributes to the (2S)-2-hydroxy-3-oxobutyl phosphate binding site; the sequence is ET. H88 (proton donor) is an active-site residue. N113 serves as a coordination point for 5-amino-6-(D-ribitylamino)uracil. Position 127 (R127) interacts with (2S)-2-hydroxy-3-oxobutyl phosphate.

It belongs to the DMRL synthase family.

It catalyses the reaction (2S)-2-hydroxy-3-oxobutyl phosphate + 5-amino-6-(D-ribitylamino)uracil = 6,7-dimethyl-8-(1-D-ribityl)lumazine + phosphate + 2 H2O + H(+). It participates in cofactor biosynthesis; riboflavin biosynthesis; riboflavin from 2-hydroxy-3-oxobutyl phosphate and 5-amino-6-(D-ribitylamino)uracil: step 1/2. Catalyzes the formation of 6,7-dimethyl-8-ribityllumazine by condensation of 5-amino-6-(D-ribitylamino)uracil with 3,4-dihydroxy-2-butanone 4-phosphate. This is the penultimate step in the biosynthesis of riboflavin. This Methylobacillus flagellatus (strain ATCC 51484 / DSM 6875 / VKM B-1610 / KT) protein is 6,7-dimethyl-8-ribityllumazine synthase.